A 414-amino-acid polypeptide reads, in one-letter code: Serine hydroxymethyltransferase (414 aa).

Residues Leu-121 and 125–127 each bind (6S)-5,6,7,8-tetrahydrofolate; that span reads GHL. Lys-229 is modified (N6-(pyridoxal phosphate)lysine).

Belongs to the SHMT family. In terms of assembly, homodimer. Requires pyridoxal 5'-phosphate as cofactor.

The protein localises to the cytoplasm. The enzyme catalyses (6R)-5,10-methylene-5,6,7,8-tetrahydrofolate + glycine + H2O = (6S)-5,6,7,8-tetrahydrofolate + L-serine. It participates in one-carbon metabolism; tetrahydrofolate interconversion. The protein operates within amino-acid biosynthesis; glycine biosynthesis; glycine from L-serine: step 1/1. Its function is as follows. Catalyzes the reversible interconversion of serine and glycine with tetrahydrofolate (THF) serving as the one-carbon carrier. This reaction serves as the major source of one-carbon groups required for the biosynthesis of purines, thymidylate, methionine, and other important biomolecules. Also exhibits THF-independent aldolase activity toward beta-hydroxyamino acids, producing glycine and aldehydes, via a retro-aldol mechanism. The chain is Serine hydroxymethyltransferase from Acidovorax ebreus (strain TPSY) (Diaphorobacter sp. (strain TPSY)).